A 323-amino-acid chain; its full sequence is tRNA N6-adenosine threonylcarbamoyltransferase (323 aa).

Residues His-110 and His-114 each contribute to the Fe cation site. Residues 131–135 (VASGG), Asp-164, Gly-177, and Asn-264 each bind substrate. Asp-288 serves as a coordination point for Fe cation.

This sequence belongs to the KAE1 / TsaD family. Requires Fe(2+) as cofactor.

The protein resides in the cytoplasm. It carries out the reaction L-threonylcarbamoyladenylate + adenosine(37) in tRNA = N(6)-L-threonylcarbamoyladenosine(37) in tRNA + AMP + H(+). Required for the formation of a threonylcarbamoyl group on adenosine at position 37 (t(6)A37) in tRNAs that read codons beginning with adenine. Is involved in the transfer of the threonylcarbamoyl moiety of threonylcarbamoyl-AMP (TC-AMP) to the N6 group of A37, together with TsaE and TsaB. TsaD likely plays a direct catalytic role in this reaction. This Thermus thermophilus (strain ATCC BAA-163 / DSM 7039 / HB27) protein is tRNA N6-adenosine threonylcarbamoyltransferase.